Reading from the N-terminus, the 182-residue chain is Ribosome-recycling factor (182 aa).

Belongs to the RRF family.

It localises to the cytoplasm. Responsible for the release of ribosomes from messenger RNA at the termination of protein biosynthesis. May increase the efficiency of translation by recycling ribosomes from one round of translation to another. This Synechococcus sp. (strain WH7803) protein is Ribosome-recycling factor.